Reading from the N-terminus, the 183-residue chain is ATP synthase subunit delta (183 aa).

Belongs to the ATPase delta chain family. As to quaternary structure, F-type ATPases have 2 components, F(1) - the catalytic core - and F(0) - the membrane proton channel. F(1) has five subunits: alpha(3), beta(3), gamma(1), delta(1), epsilon(1). F(0) has three main subunits: a(1), b(2) and c(10-14). The alpha and beta chains form an alternating ring which encloses part of the gamma chain. F(1) is attached to F(0) by a central stalk formed by the gamma and epsilon chains, while a peripheral stalk is formed by the delta and b chains.

It is found in the cell membrane. F(1)F(0) ATP synthase produces ATP from ADP in the presence of a proton or sodium gradient. F-type ATPases consist of two structural domains, F(1) containing the extramembraneous catalytic core and F(0) containing the membrane proton channel, linked together by a central stalk and a peripheral stalk. During catalysis, ATP synthesis in the catalytic domain of F(1) is coupled via a rotary mechanism of the central stalk subunits to proton translocation. Functionally, this protein is part of the stalk that links CF(0) to CF(1). It either transmits conformational changes from CF(0) to CF(1) or is implicated in proton conduction. In Mycoplasmopsis synoviae (strain 53) (Mycoplasma synoviae), this protein is ATP synthase subunit delta.